We begin with the raw amino-acid sequence, 143 residues long: MELNSIKPAEGSKHAKRRVGRGIGSGLGKTAGRGHKGQKSRSGGYHKVGFEGGQMPLQRRLPKRGFKSHLLKFNAEVTLSALEQLGLAEVDLAALKQAGLVGEIAKVVKIIKSGEISKAVKLNGIGATAGAKAAIEAAGGSIA.

Positions 1 to 56 are disordered; it reads MELNSIKPAEGSKHAKRRVGRGIGSGLGKTAGRGHKGQKSRSGGYHKVGFEGGQMP. A compositionally biased stretch (gly residues) spans 21–31; the sequence is RGIGSGLGKTA.

Belongs to the universal ribosomal protein uL15 family. As to quaternary structure, part of the 50S ribosomal subunit.

Functionally, binds to the 23S rRNA. The protein is Large ribosomal subunit protein uL15 of Delftia acidovorans (strain DSM 14801 / SPH-1).